The sequence spans 327 residues: Replication factor C small subunit (327 aa).

47–54 is a binding site for ATP; that stretch reads GPPGTGKT.

The protein belongs to the activator 1 small subunits family. RfcS subfamily. As to quaternary structure, heteromultimer composed of small subunits (RfcS) and large subunits (RfcL).

Its function is as follows. Part of the RFC clamp loader complex which loads the PCNA sliding clamp onto DNA. This chain is Replication factor C small subunit, found in Sulfurisphaera tokodaii (strain DSM 16993 / JCM 10545 / NBRC 100140 / 7) (Sulfolobus tokodaii).